We begin with the raw amino-acid sequence, 120 residues long: Small ribosomal subunit protein bS16 (120 aa).

Positions K84 to K110 are enriched in basic and acidic residues. The interval K84 to E120 is disordered. A compositionally biased stretch (low complexity) spans A111–E120.

It belongs to the bacterial ribosomal protein bS16 family.

The sequence is that of Small ribosomal subunit protein bS16 from Rhizobium rhizogenes (strain K84 / ATCC BAA-868) (Agrobacterium radiobacter).